A 187-amino-acid chain; its full sequence is Transcription antitermination protein NusB (187 aa).

Positions 135-187 (APAPESVAEEADEESSDSDAAASDPTDEGDVSDSSGASDEPAAPSAEIQPTVD) are disordered. The span at 141 to 151 (VAEEADEESSD) shows a compositional bias: acidic residues.

This sequence belongs to the NusB family.

Involved in transcription antitermination. Required for transcription of ribosomal RNA (rRNA) genes. Binds specifically to the boxA antiterminator sequence of the ribosomal RNA (rrn) operons. This chain is Transcription antitermination protein NusB, found in Bifidobacterium longum subsp. infantis (strain ATCC 15697 / DSM 20088 / JCM 1222 / NCTC 11817 / S12).